Here is a 192-residue protein sequence, read N- to C-terminus: Xanthine phosphoribosyltransferase 2 (192 aa).

Xanthine-binding residues include leucine 20 and asparagine 27. 131–135 lines the 5-phospho-alpha-D-ribose 1-diphosphate pocket; sequence ANACA. Lysine 159 contributes to the xanthine binding site.

Belongs to the purine/pyrimidine phosphoribosyltransferase family. Xpt subfamily. As to quaternary structure, homodimer.

It is found in the cytoplasm. It catalyses the reaction XMP + diphosphate = xanthine + 5-phospho-alpha-D-ribose 1-diphosphate. Its pathway is purine metabolism; XMP biosynthesis via salvage pathway; XMP from xanthine: step 1/1. Its function is as follows. Converts the preformed base xanthine, a product of nucleic acid breakdown, to xanthosine 5'-monophosphate (XMP), so it can be reused for RNA or DNA synthesis. This is Xanthine phosphoribosyltransferase 2 from Clostridium perfringens (strain ATCC 13124 / DSM 756 / JCM 1290 / NCIMB 6125 / NCTC 8237 / Type A).